A 642-amino-acid chain; its full sequence is Threonine--tRNA ligase (642 aa).

The 61-residue stretch at 1–61 folds into the TGS domain; that stretch reads MPVITLPDGS…ENDAQLSIIT (61 aa). The tract at residues 243-534 is catalytic; sequence DHRKIGKQLD…LTEEFAGFFP (292 aa). Lys-286 carries the post-translational modification N6-acetyllysine. Positions 334, 385, and 511 each coordinate Zn(2+).

Belongs to the class-II aminoacyl-tRNA synthetase family. In terms of assembly, homodimer. It depends on Zn(2+) as a cofactor.

The protein localises to the cytoplasm. It carries out the reaction tRNA(Thr) + L-threonine + ATP = L-threonyl-tRNA(Thr) + AMP + diphosphate + H(+). Functionally, catalyzes the attachment of threonine to tRNA(Thr) in a two-step reaction: L-threonine is first activated by ATP to form Thr-AMP and then transferred to the acceptor end of tRNA(Thr). Also edits incorrectly charged L-seryl-tRNA(Thr). The sequence is that of Threonine--tRNA ligase from Escherichia coli O157:H7.